A 465-amino-acid chain; its full sequence is tRNA modification GTPase MnmE (465 aa).

Positions 27, 91, and 130 each coordinate (6S)-5-formyl-5,6,7,8-tetrahydrofolate. Positions 227–386 constitute a TrmE-type G domain; that stretch reads GLSTAIIGRP…LEAKIADLFF (160 aa). A K(+)-binding site is contributed by Asn-237. Residues 237–242, 256–262, and 281–284 contribute to the GTP site; these read NVGKSS, TDIAGTT, and DTAG. Ser-241 is a Mg(2+) binding site. 3 residues coordinate K(+): Thr-256, Ile-258, and Thr-261. Thr-262 lines the Mg(2+) pocket. (6S)-5-formyl-5,6,7,8-tetrahydrofolate is bound at residue Lys-465.

It belongs to the TRAFAC class TrmE-Era-EngA-EngB-Septin-like GTPase superfamily. TrmE GTPase family. Homodimer. Heterotetramer of two MnmE and two MnmG subunits. K(+) is required as a cofactor.

It is found in the cytoplasm. In terms of biological role, exhibits a very high intrinsic GTPase hydrolysis rate. Involved in the addition of a carboxymethylaminomethyl (cmnm) group at the wobble position (U34) of certain tRNAs, forming tRNA-cmnm(5)s(2)U34. This is tRNA modification GTPase MnmE from Enterococcus faecalis (strain ATCC 700802 / V583).